The chain runs to 843 residues: Pentatricopeptide repeat-containing protein At4g21880, mitochondrial (843 aa).

7 PPR repeats span residues 392–426 (SSTS…GLVI), 427–461 (SANI…SVKP), 462–496 (NSET…NLAP), 497–531 (NSSM…DVKP), 532–562 (DSVT…AGVE), 564–594 (NKHV…LEVP), and 598–632 (HNEL…RCPV).

The protein belongs to the PPR family. P subfamily.

Its subcellular location is the mitochondrion. The chain is Pentatricopeptide repeat-containing protein At4g21880, mitochondrial from Arabidopsis thaliana (Mouse-ear cress).